Here is a 75-residue protein sequence, read N- to C-terminus: Disintegrin CTF-II (75 aa).

One can recognise a Disintegrin domain in the interval 1–75; it reads ELLEEGEDCY…SDDCPRWNDL (75 aa). 6 disulfides stabilise this stretch: Cys9/Cys24, Cys11/Cys19, Cys18/Cys41, Cys32/Cys38, Cys37/Cys62, and Cys50/Cys69. The Cell attachment site motif lies at 54 to 56; that stretch reads RGD.

This sequence belongs to the venom metalloproteinase (M12B) family. P-II subfamily. P-IIa sub-subfamily. Monomer (disintegrin). Expressed by the venom gland.

It is found in the secreted. Inhibits fibrinogen interaction with platelet receptors, and inhibits aggregation induced by ADP, thrombin, collagen and platelet-activating factor. Acts by binding to the alpha-IIb/beta-3 (ITGA2B/ITGB3) on the platelet surface. The polypeptide is Disintegrin CTF-II (Protobothrops flavoviridis (Habu)).